The primary structure comprises 115 residues: Insulin (115 aa).

A signal peptide spans 1–22 (MAALWLQSVSLLVLMLVSWSGS). 3 disulfides stabilise this stretch: Cys32–Cys101, Cys44–Cys114, and Cys100–Cys105. Residues 56-92 (DVDPLLGFLPAKSGGAAAGGENEVAEFAFKDQMEMMV) constitute a propeptide, c peptide.

The protein belongs to the insulin family. In terms of assembly, heterodimer of a B chain and an A chain linked by two disulfide bonds.

The protein resides in the secreted. Insulin decreases blood glucose concentration. It increases cell permeability to monosaccharides, amino acids and fatty acids. It accelerates glycolysis, the pentose phosphate cycle, and glycogen synthesis in liver. This chain is Insulin (ins), found in Verasper moseri (Barfin flounder).